The primary structure comprises 320 residues: RNA polymerase sigma factor SigA2 (320 aa).

The segment at 89–159 (MIEANLRLVV…TRAIAQQSRT (71 aa)) is sigma-70 factor domain-2. The Interaction with polymerase core subunit RpoC motif lies at 113–116 (DLIQ). Residues 168–243 (EKLNKLKKTQ…EDEQSSPSDY (76 aa)) are sigma-70 factor domain-3. Residues 256-310 (LMAELTPQQQAVIALRYGLDEGDSLSLAKVGERLNISRERVRKLERQAMDHLRRR) form a sigma-70 factor domain-4 region. Residues 282–301 (LAKVGERLNISRERVRKLER) constitute a DNA-binding region (H-T-H motif).

Belongs to the sigma-70 factor family.

Its subcellular location is the cytoplasm. Sigma factors are initiation factors that promote the attachment of RNA polymerase to specific initiation sites and are then released. This sigma factor is a component of the biological clock pathway that affects the circadian expression of a subset of genes in this bacterium. In Synechococcus elongatus (strain ATCC 33912 / PCC 7942 / FACHB-805) (Anacystis nidulans R2), this protein is RNA polymerase sigma factor SigA2 (sigA2).